Reading from the N-terminus, the 59-residue chain is Large ribosomal subunit protein bL32 (59 aa).

The disordered stretch occupies residues 35-59 (EAHLRHHISPNGYYRGRKVVKTKND). The segment covering 49-59 (RGRKVVKTKND) has biased composition (basic residues).

It belongs to the bacterial ribosomal protein bL32 family.

This chain is Large ribosomal subunit protein bL32, found in Polynucleobacter asymbioticus (strain DSM 18221 / CIP 109841 / QLW-P1DMWA-1) (Polynucleobacter necessarius subsp. asymbioticus).